Consider the following 43-residue polypeptide: METATVLIVFIASLLLGVTGYSVYTAFGPNSKDLRDPFEDHED.

Residues 7 to 27 (LIVFIASLLLGVTGYSVYTAF) traverse the membrane as a helical segment.

Belongs to the PsbN family.

The protein resides in the plastid. It is found in the chloroplast thylakoid membrane. In terms of biological role, may play a role in photosystem I and II biogenesis. This is Protein PsbN from Rhodomonas salina (Cryptomonas salina).